A 233-amino-acid chain; its full sequence is Pirin-like protein YhaK (233 aa).

It belongs to the pirin family. In terms of assembly, monomer.

Its subcellular location is the cytoplasm. In terms of biological role, does not have quercetin 2,3-dioxygenase activity. This Escherichia coli O157:H7 protein is Pirin-like protein YhaK (yhaK).